The chain runs to 141 residues: Hemoglobin subunit alpha-3 (141 aa).

An N-acetylserine modification is found at S1. A Globin domain is found at 1–141 (SLSASEKAAV…VSAVLTSKYR (141 aa)). An O2-binding site is contributed by H58. Heme b is bound at residue H87.

Belongs to the globin family. As to quaternary structure, heterotetramer of two alpha chains and two beta chains. Red blood cells.

Its function is as follows. This is a tadpole (larval) alpha chain. This Aquarana catesbeiana (American bullfrog) protein is Hemoglobin subunit alpha-3.